The chain runs to 244 residues: Phosphoadenosine 5'-phosphosulfate reductase (244 aa).

Cysteine 239 acts as the Nucleophile; cysteine thiosulfonate intermediate in catalysis.

This sequence belongs to the PAPS reductase family. CysH subfamily.

It localises to the cytoplasm. It catalyses the reaction [thioredoxin]-disulfide + sulfite + adenosine 3',5'-bisphosphate + 2 H(+) = [thioredoxin]-dithiol + 3'-phosphoadenylyl sulfate. It participates in sulfur metabolism; hydrogen sulfide biosynthesis; sulfite from sulfate: step 3/3. In terms of biological role, catalyzes the formation of sulfite from phosphoadenosine 5'-phosphosulfate (PAPS) using thioredoxin as an electron donor. The sequence is that of Phosphoadenosine 5'-phosphosulfate reductase from Enterobacter sp. (strain 638).